Here is a 97-residue protein sequence, read N- to C-terminus: Protein SENESCENCE-ASSOCIATED GENE 21, mitochondrial (97 aa).

The transit peptide at 1–46 (MARSISNVKIVSAFVSRELSNAIFRRGYAATAAQGSVSSGGRSGAV) directs the protein to the mitochondrion.

Belongs to the LEA type 3 family. In terms of tissue distribution, expressed in roots, stems leaves and flowers, but not in seeds. In short days, observed in cotyledons and roots but absent from rosette leaves.

It is found in the mitochondrion. In terms of biological role, mediates tolerance to oxidative stresses (e.g. hydrogen peroxide H(2)O(2), diamide, menadione and tert-butyl hydroperoxide) by minimizing the negative effects of oxidation and monitoring photosynthesis during stress. Promotes root development. Prevents premature aging (e.g. senescence and flowering). Involved in resistance against compatible pathogens such as Botrytis cinerea and Pseudomonas syringae pv. tomato. The sequence is that of Protein SENESCENCE-ASSOCIATED GENE 21, mitochondrial from Arabidopsis thaliana (Mouse-ear cress).